Here is a 202-residue protein sequence, read N- to C-terminus: Protein DEHYDRATION-INDUCED 19 homolog 5 (202 aa).

Positions 88 to 97 (SHLLKRRKPS) are enriched in basic residues. A disordered region spans residues 88–120 (SHLLKRRKPSRPSSSWPTPSNNSDPYFEGPPQY). Residues 98-112 (RPSSSWPTPSNNSDP) are compositionally biased toward low complexity.

This sequence belongs to the Di19 family.

This chain is Protein DEHYDRATION-INDUCED 19 homolog 5 (DI19-5), found in Oryza sativa subsp. japonica (Rice).